The following is a 4246-amino-acid chain: Intermembrane lipid transfer protein vps13F (4246 aa).

A Chorein N-terminal domain is found at 2 to 113 (FESIVSNLLT…LLLQKKLKKL (112 aa)). Disordered stretches follow at residues 141–271 (IKEK…EDED), 401–420 (PKKS…PPPK), 591–759 (KAED…SILG), 914–944 (VSSS…EKKL), 964–1014 (KKSK…TNDE), 1217–1251 (QAQQ…IKSP), 1356–1379 (ISTH…DRVD), 1395–1436 (YNGV…KSKK), 1622–1683 (REKR…KSQS), 2101–2131 (LESL…QQQQ), 2211–2237 (HHSK…EKEK), 2471–2513 (QQQH…KSKQ), 2704–2756 (LSTS…QTTK), 3421–3449 (IDDD…TSPL), 3611–3652 (KTLN…NNQN), and 3794–3813 (NNNN…NIDE). A compositionally biased stretch (low complexity) spans 168 to 201 (NASPVNSNNNNNNNSNLVSESNIPSSSSSSSSSL). A compositionally biased stretch (basic and acidic residues) spans 207 to 217 (NSSKDANKSDD). Acidic residues predominate over residues 218-271 (TDMDVDDDDEFQEATEGDYDNEEEQDDHDEEDDLSDDDDDDDDEEDDYEMEDED). Low complexity-rich tracts occupy residues 401-413 (PKKS…TTTP) and 597-658 (QQQQ…SNST). A compositionally biased stretch (basic and acidic residues) spans 659–668 (DSKDIMKSSG). Residues 669–680 (DKNVNNNNNMGD) are compositionally biased toward low complexity. The span at 681–702 (NENKDNIDKKEENKNDDQDNKN) shows a compositional bias: basic and acidic residues. 2 stretches are compositionally biased toward low complexity: residues 725–747 (SGGW…QQQQ) and 914–924 (VSSSPSPVSSP). 2 stretches are compositionally biased toward basic and acidic residues: residues 925 to 944 (SRDK…EKKL) and 987 to 1001 (DKYS…REES). Residues 1217–1241 (QAQQQAQQQQQSQHPSSNDDNSSSN) are compositionally biased toward low complexity. Residues 1400–1409 (SDDDNNDDEN) are compositionally biased toward acidic residues. Basic and acidic residues-rich tracts occupy residues 1410 to 1431 (DKTT…DSLK) and 1622 to 1634 (REKR…DKDN). The segment covering 1644–1670 (QQSIPQKQQQQQQQQQQQQQQQQQQQQ) has biased composition (low complexity). 5 stretches are compositionally biased toward low complexity: residues 2471–2506 (QQQH…NNNN), 2705–2755 (STST…TQTT), 3430–3449 (DSGS…TSPL), 3613–3652 (LNNN…NNQN), and 3794–3809 (NNNN…NDFN).

This sequence belongs to the VPS13 family.

It is found in the membrane. In terms of biological role, mediates the transfer of lipids between membranes at organelle contact sites. In Dictyostelium discoideum (Social amoeba), this protein is Intermembrane lipid transfer protein vps13F (vps13F).